The chain runs to 147 residues: Protein-export protein SecB (147 aa).

Belongs to the SecB family. In terms of assembly, homotetramer, a dimer of dimers. One homotetramer interacts with 1 SecA dimer.

It is found in the cytoplasm. In terms of biological role, one of the proteins required for the normal export of preproteins out of the cell cytoplasm. It is a molecular chaperone that binds to a subset of precursor proteins, maintaining them in a translocation-competent state. It also specifically binds to its receptor SecA. This Neisseria gonorrhoeae (strain ATCC 700825 / FA 1090) protein is Protein-export protein SecB.